The chain runs to 505 residues: Megakaryocyte-associated tyrosine-protein kinase (505 aa).

Residues 46 to 108 (APGTQCMTKC…AAAALRHGEA (63 aa)) form the SH3 domain. The region spanning 120–209 (WFHGKISGQE…AICTKLVKPR (90 aa)) is the SH2 domain. The Protein kinase domain occupies 233–481 (LTLGAQIGEG…IVEKLGRELR (249 aa)). ATP contacts are provided by residues 239 to 247 (IGEGEFGAV) and Lys260. Catalysis depends on Asp350, which acts as the Proton acceptor. The segment at 483 to 505 (VGVSAPAGGQEAEGSAPTRSQDP) is disordered.

Belongs to the protein kinase superfamily. Tyr protein kinase family. CSK subfamily. In terms of assembly, interacts with KIT. As to expression, most abundant in brain, and to a lesser extent in the spleen, the thymus and the liver. Also found in the T-cell lineage.

Its subcellular location is the cytoplasm. It localises to the membrane. The catalysed reaction is L-tyrosyl-[protein] + ATP = O-phospho-L-tyrosyl-[protein] + ADP + H(+). In terms of biological role, could play a significant role in the signal transduction of hematopoietic cells. May regulate tyrosine kinase activity of SRC-family members in brain by specifically phosphorylating their C-terminal regulatory tyrosine residue which acts as a negative regulatory site. It may play an inhibitory role in the control of T-cell proliferation. The protein is Megakaryocyte-associated tyrosine-protein kinase (Matk) of Mus musculus (Mouse).